Here is a 55-residue protein sequence, read N- to C-terminus: MAKATTIKIKLLSTADTGFFYVTKKNSRTMTDKMTKRKYDPIARKHVEFKETKIK.

Belongs to the bacterial ribosomal protein bL33 family.

This is Large ribosomal subunit protein bL33 from Chelativorans sp. (strain BNC1).